Here is a 535-residue protein sequence, read N- to C-terminus: Phosphoenolpyruvate carboxykinase (ATP) (535 aa).

Positions 59, 201, and 207 each coordinate substrate. Residues Lys-207, His-226, and 243–251 contribute to the ATP site; that span reads GLSGTGKTT. The Mn(2+) site is built by Lys-207 and His-226. Asp-264 contacts Mn(2+). Residues Glu-292, Arg-328, 444 to 445, and Thr-450 contribute to the ATP site; that span reads RI. Residue Arg-328 participates in substrate binding.

Belongs to the phosphoenolpyruvate carboxykinase (ATP) family. Mn(2+) is required as a cofactor.

It localises to the cytoplasm. It catalyses the reaction oxaloacetate + ATP = phosphoenolpyruvate + ADP + CO2. The protein operates within carbohydrate biosynthesis; gluconeogenesis. Involved in the gluconeogenesis. Catalyzes the conversion of oxaloacetate (OAA) to phosphoenolpyruvate (PEP) through direct phosphoryl transfer between the nucleoside triphosphate and OAA. The sequence is that of Phosphoenolpyruvate carboxykinase (ATP) from Bacteroides thetaiotaomicron (strain ATCC 29148 / DSM 2079 / JCM 5827 / CCUG 10774 / NCTC 10582 / VPI-5482 / E50).